The primary structure comprises 207 residues: Outer-membrane lipoprotein LolB (207 aa).

A signal peptide spans M1–S26. C27 is lipidated: N-palmitoyl cysteine. Residue C27 is the site of S-diacylglycerol cysteine attachment.

This sequence belongs to the LolB family. As to quaternary structure, monomer.

The protein localises to the cell outer membrane. In terms of biological role, plays a critical role in the incorporation of lipoproteins in the outer membrane after they are released by the LolA protein. The polypeptide is Outer-membrane lipoprotein LolB (Francisella tularensis subsp. tularensis (strain FSC 198)).